The following is a 506-amino-acid chain: Abscisic acid 8'-hydroxylase 2 (506 aa).

Residues 3–23 form a helical membrane-spanning segment; it reads FLLFFVFVTAAVLCFVVPAFL. Residue cysteine 437 participates in heme binding.

This sequence belongs to the cytochrome P450 family. Heme serves as cofactor. In terms of tissue distribution, in internodes and expanding leaves. Weak expression in seedlings.

It localises to the membrane. The catalysed reaction is 2-cis-(+)-abscisate + reduced [NADPH--hemoprotein reductase] + O2 = (+)-8'-hydroxyabscisate + oxidized [NADPH--hemoprotein reductase] + H2O + H(+). Its pathway is plant hormone degradation; abscisic acid degradation. Involved in the oxidative degradation of abscisic acid. This Oryza sativa subsp. indica (Rice) protein is Abscisic acid 8'-hydroxylase 2 (CYP707A6).